Reading from the N-terminus, the 238-residue chain is Type III secretion protein hrcQa (238 aa).

The hrcQa-C stretch occupies residues 66–238; the sequence is DAEALLSLLG…SHEEHRHHEY (173 aa).

Interacts with hrcQb.

Its subcellular location is the cell inner membrane. In terms of biological role, component of the type III secretion system, which is required for effector protein delivery, parasitism, and pathogenicity. Probably participates in the formation of a C-ring-like assembly along with hrcQb. This Pseudomonas savastanoi pv. phaseolicola (Pseudomonas syringae pv. phaseolicola) protein is Type III secretion protein hrcQa (hrcQa).